We begin with the raw amino-acid sequence, 253 residues long: Allene oxide cyclase 2, chloroplastic (253 aa).

A chloroplast-targeting transit peptide spans 1-77; that stretch reads MASSAVSLQS…SQNGNIENPR (77 aa).

Belongs to the allene oxide cyclase family. Highly expressed in fully developed leaves.

It is found in the plastid. Its subcellular location is the chloroplast. It carries out the reaction (9Z,13S,15Z)-12,13-epoxyoctadeca-9,11,15-trienoate = (9S,13S,15Z)-12-oxophyto-10,15-dienoate. Involved in the production of 12-oxo-phytodienoic acid (OPDA), a precursor of jasmonic acid. The chain is Allene oxide cyclase 2, chloroplastic (AOC2) from Arabidopsis thaliana (Mouse-ear cress).